Reading from the N-terminus, the 258-residue chain is Imidazole glycerol phosphate synthase subunit HisF (258 aa).

Residues D11 and D130 contribute to the active site.

The protein belongs to the HisA/HisF family. As to quaternary structure, heterodimer of HisH and HisF.

It localises to the cytoplasm. It carries out the reaction 5-[(5-phospho-1-deoxy-D-ribulos-1-ylimino)methylamino]-1-(5-phospho-beta-D-ribosyl)imidazole-4-carboxamide + L-glutamine = D-erythro-1-(imidazol-4-yl)glycerol 3-phosphate + 5-amino-1-(5-phospho-beta-D-ribosyl)imidazole-4-carboxamide + L-glutamate + H(+). It functions in the pathway amino-acid biosynthesis; L-histidine biosynthesis; L-histidine from 5-phospho-alpha-D-ribose 1-diphosphate: step 5/9. Its function is as follows. IGPS catalyzes the conversion of PRFAR and glutamine to IGP, AICAR and glutamate. The HisF subunit catalyzes the cyclization activity that produces IGP and AICAR from PRFAR using the ammonia provided by the HisH subunit. The sequence is that of Imidazole glycerol phosphate synthase subunit HisF from Rhodospirillum centenum (strain ATCC 51521 / SW).